The primary structure comprises 143 residues: MLTPKRVKWRRQHRPDRAGKAKGGTKIQFGDLALQSLDVAWISSRQIEAARIAMTRHVKRGGKVWIRIFPDRPITAKPAETRMGSGKGSPEYWVAVVKPGRIMFEIAGVPEETAREALRLASHKLPCRTKIVKRQEVGEAGEG.

Positions 1-14 (MLTPKRVKWRRQHR) are enriched in basic residues. Positions 1 to 23 (MLTPKRVKWRRQHRPDRAGKAKG) are disordered.

The protein belongs to the universal ribosomal protein uL16 family. As to quaternary structure, part of the 50S ribosomal subunit.

Its function is as follows. Binds 23S rRNA and is also seen to make contacts with the A and possibly P site tRNAs. This Desulforudis audaxviator (strain MP104C) protein is Large ribosomal subunit protein uL16.